The sequence spans 104 residues: L-rhamnose mutarotase (104 aa).

A substrate-binding site is contributed by Tyr-18. His-22 functions as the Proton donor in the catalytic mechanism. Residues Tyr-41 and Trp-76–Trp-77 each bind substrate.

It belongs to the rhamnose mutarotase family. In terms of assembly, homodimer.

It localises to the cytoplasm. It carries out the reaction alpha-L-rhamnose = beta-L-rhamnose. Its pathway is carbohydrate metabolism; L-rhamnose metabolism. Its function is as follows. Involved in the anomeric conversion of L-rhamnose. The sequence is that of L-rhamnose mutarotase from Salmonella dublin (strain CT_02021853).